The chain runs to 546 residues: Probable E3 ubiquitin-protein ligase NGR_a03640 (546 aa).

Residues 1-70 are disordered; sequence MNVQRPGLAV…RPWEGRPQEA (70 aa). The interaction with target proteins stretch occupies residues 1-248; it reads MNVQRPGLAV…YAGPQIFLPM (248 aa). Low complexity predominate over residues 22–48; sequence SEPGSPAAAARWVEASTEAEASAASSS. The segment covering 58 to 67 has biased composition (basic and acidic residues); the sequence is AEERPWEGRP. 5 LRR repeats span residues 104–125, 126–144, 145–166, 167–186, and 187–208; these read GLRR…LPGT, LLEL…DLPA, GLQR…LPAA, LEWL…MIPP, and ELIW…LLTQ. The linker stretch occupies residues 249-256; sequence GPVELARR. The NEL domain maps to 257 to 546; it reads PLHEVVADWL…KVLRGRGLEL (290 aa). Residues 257-546 are E3 ubiquitin-protein ligase catalytic domain; it reads PLHEVVADWL…KVLRGRGLEL (290 aa). The Glycyl thioester intermediate role is filled by C338.

This sequence belongs to the LRR-containing bacterial E3 ligase family. Ubiquitinated in the presence of host E1 ubiquitin-activating enzyme, E2 ubiquitin-conjugating enzyme and ubiquitin.

It localises to the secreted. It is found in the host cytoplasm. In terms of biological role, effector proteins function to alter host cell physiology and promote bacterial survival in host tissues. This protein is an E3 ubiquitin ligase that interferes with host's ubiquitination pathway. The sequence is that of Probable E3 ubiquitin-protein ligase NGR_a03640 from Sinorhizobium fredii (strain NBRC 101917 / NGR234).